Consider the following 430-residue polypeptide: MTTLTLNTSLLSSRRILAAFSGGLDSTVLLHQLVLWRERHPDVTLRAIHIHHGLSPHADSWVRHCETVCERWQVPLVVERVTLADNGLGIEAHAREARYRAFAQTLLPGEVLATAQHLDDQCETFLLALKRGSGPAGLSAMGERSPFAGTLLLRPLLRETRKTLEQWAVRHGLCWIEDESNQDDAYDRNFLRLRALPLLQQRWPHFPAAVARSATLCAEQERLLDELLASDLTDCITAEGTLRLSPLMSMSDVRRAAILRRWLAMRNAPMPSRDALERIWQEVALARDDASPCLRFGDREIRRYQSQLWWIKSVAGQHETTVAWPVWQTPLALPAGLGTVQLVPGGELRRPREEESVSIRFKAPGVLHIVGRNGGRKLKKIWQEQGIPPWRRDTTPLLFYGETLIAAAGVFVTREGAAEDKEGVSLVWHA.

Residue 21 to 26 (SGGLDS) participates in ATP binding.

This sequence belongs to the tRNA(Ile)-lysidine synthase family.

It is found in the cytoplasm. It catalyses the reaction cytidine(34) in tRNA(Ile2) + L-lysine + ATP = lysidine(34) in tRNA(Ile2) + AMP + diphosphate + H(+). In terms of biological role, ligates lysine onto the cytidine present at position 34 of the AUA codon-specific tRNA(Ile) that contains the anticodon CAU, in an ATP-dependent manner. Cytidine is converted to lysidine, thus changing the amino acid specificity of the tRNA from methionine to isoleucine. This Salmonella paratyphi B (strain ATCC BAA-1250 / SPB7) protein is tRNA(Ile)-lysidine synthase.